Reading from the N-terminus, the 104-residue chain is MSEKQKIRIRLKAFDHRLIDRWASEIVETAKRTGAQVRGPIPLPTKIERYTILVSPHADKDARDQYETRTHKRVLDIVDPNDKTVDALMKLELAAGVDVQIKLT.

It belongs to the universal ribosomal protein uS10 family. In terms of assembly, part of the 30S ribosomal subunit.

Its function is as follows. Involved in the binding of tRNA to the ribosomes. The protein is Small ribosomal subunit protein uS10 of Xanthomonas oryzae pv. oryzae (strain MAFF 311018).